The primary structure comprises 210 residues: UPF0301 protein OCAR_7326/OCA5_c07920 (210 aa).

Belongs to the UPF0301 (AlgH) family.

This chain is UPF0301 protein OCAR_7326/OCA5_c07920, found in Afipia carboxidovorans (strain ATCC 49405 / DSM 1227 / KCTC 32145 / OM5) (Oligotropha carboxidovorans).